We begin with the raw amino-acid sequence, 1138 residues long: Serine/threonine/tyrosine-interacting-like protein 2 (1138 aa).

Positions 1–20 (MATGGDAEEEQVVPNEEDEA) are disordered. Residues 132–280 (NEVDEVWPNV…LRELNEKLME (149 aa)) form the Tyrosine-protein phosphatase domain. Position 291 is a phosphoserine (Ser-291). Disordered stretches follow at residues 309–336 (EEED…VTLI), 348–473 (EWRK…TWDM), 486–515 (ARKY…DDEE), 552–575 (KKDS…GEKN), 592–618 (QKKV…AKKR), 660–694 (AAPS…LPNL), 761–800 (SGCL…VRGT), and 850–1117 (FKKK…DEAI). The segment covering 316–331 (SHLSGSSLGKASQVSK) has biased composition (polar residues). Position 373 is a phosphoserine (Ser-373). Positions 376 to 385 (DGDDCEDEDV) are enriched in acidic residues. Residues 386–409 (ERIIQEWQSRNERYQAKGREQWNR) are compositionally biased toward basic and acidic residues. The residue at position 427 (Thr-427) is a Phosphothreonine. Ser-503 and Ser-555 each carry phosphoserine. 2 stretches are compositionally biased toward basic and acidic residues: residues 552–567 (KKDS…HGTE) and 595–614 (VGSE…DTVL). The segment covering 672–687 (SVLSTQSHRSHASNMP) has biased composition (polar residues). A compositionally biased stretch (low complexity) spans 773–788 (SSDVQSVLSSTSSLTS). Residues 858-871 (DEDMSVGDRDEDTD) show a composition bias toward acidic residues. At Ser-862 the chain carries Phosphoserine. The segment covering 878–897 (RYSSRSNSQKPETDASSSLA) has biased composition (polar residues). Phosphoserine is present on Ser-929. Residues 936 to 947 (SGSSRGRYTRSS) show a composition bias toward low complexity. Residues 965-977 (RSQEQDTSFHEAN) show a composition bias toward basic and acidic residues. Ser-966 carries the post-translational modification Phosphoserine. Polar residues predominate over residues 980-992 (TVRNTSRFSSSTT). Ser-1016 is modified (phosphoserine). Basic and acidic residues-rich tracts occupy residues 1035–1059 (PEPR…KSDF) and 1074–1091 (RSEE…EEGR). The span at 1095-1106 (GRQSQYRRSTNQ) shows a compositional bias: polar residues. The segment covering 1107-1116 (QEEEEMDDEA) has biased composition (acidic residues).

It belongs to the protein-tyrosine phosphatase family. Non-receptor class dual specificity subfamily.

The protein resides in the cytoplasm. Its subcellular location is the myofibril. The protein localises to the sarcomere. Functionally, may be required for myofiber maturation. The protein is Serine/threonine/tyrosine-interacting-like protein 2 (Styxl2) of Mus musculus (Mouse).